A 250-amino-acid chain; its full sequence is Gamma-secretase subunit APH1-like (250 aa).

7 consecutive transmembrane segments (helical) span residues 5 to 25 (AGIG…VSVI), 29 to 49 (PFLI…LIIL), 57 to 77 (LPLK…SVCF), 116 to 136 (IALA…CLSL), 157 to 177 (FLIS…SMVI), 191 to 211 (IIVP…FASE), and 212 to 232 (GCVI…VHCG).

It belongs to the APH-1 family. As to quaternary structure, probable component of the gamma-secretase complex, a complex composed of a presenilin homodimer, nicastrin, APH1 and PEN2.

It localises to the membrane. Probable subunit of the gamma-secretase complex, an endoprotease complex that catalyzes the intramembrane cleavage of integral proteins such as Notch receptors. The sequence is that of Gamma-secretase subunit APH1-like from Arabidopsis thaliana (Mouse-ear cress).